The chain runs to 72 residues: SRY-related protein AES4 (72 aa).

The HMG box DNA-binding region spans 1–69 (VKRPMNAFMV…KHMADYPDYK (69 aa)).

Its subcellular location is the nucleus. This is SRY-related protein AES4 from Alligator mississippiensis (American alligator).